The chain runs to 463 residues: Glutamate-1-semialdehyde 2,1-aminomutase, chloroplastic (463 aa).

A chloroplast-targeting transit peptide spans 1-30 (MQMQLNAKTVQGAFKAQRPRSVRGNVAVRA). Lys-303 is modified (N6-(pyridoxal phosphate)lysine).

Belongs to the class-III pyridoxal-phosphate-dependent aminotransferase family. HemL subfamily. Homodimer. The cofactor is pyridoxal 5'-phosphate.

The protein localises to the plastid. It is found in the chloroplast. The catalysed reaction is (S)-4-amino-5-oxopentanoate = 5-aminolevulinate. The protein operates within porphyrin-containing compound metabolism; protoporphyrin-IX biosynthesis; 5-aminolevulinate from L-glutamyl-tRNA(Glu): step 2/2. It functions in the pathway porphyrin-containing compound metabolism; chlorophyll biosynthesis. The chain is Glutamate-1-semialdehyde 2,1-aminomutase, chloroplastic (GSA) from Chlamydomonas reinhardtii (Chlamydomonas smithii).